We begin with the raw amino-acid sequence, 250 residues long: ATP synthase subunit a (250 aa).

A run of 6 helical transmembrane segments spans residues 26–46 (FTNA…FLYL), 84–104 (FFPM…LGMV), 114–134 (IIVT…YGFY), 143–163 (LFVP…IEII), 193–213 (FVAS…LPLI), and 216–236 (VALT…FAVL).

Belongs to the ATPase A chain family. F-type ATPases have 2 components, CF(1) - the catalytic core - and CF(0) - the membrane proton channel. CF(1) has five subunits: alpha(3), beta(3), gamma(1), delta(1), epsilon(1). CF(0) has three main subunits: a(1), b(2) and c(9-12). The alpha and beta chains form an alternating ring which encloses part of the gamma chain. CF(1) is attached to CF(0) by a central stalk formed by the gamma and epsilon chains, while a peripheral stalk is formed by the delta and b chains.

Its subcellular location is the cell inner membrane. Functionally, key component of the proton channel; it plays a direct role in the translocation of protons across the membrane. This chain is ATP synthase subunit a, found in Rhizobium meliloti (strain 1021) (Ensifer meliloti).